Consider the following 79-residue polypeptide: Putative Fis-like DNA-binding protein (79 aa).

Positions 55 to 74 (QSKASVMLGLNRNTLRKKLI) form a DNA-binding region, H-T-H motif.

Belongs to the transcriptional regulatory Fis family.

This is Putative Fis-like DNA-binding protein from Neisseria meningitidis serogroup A / serotype 4A (strain DSM 15465 / Z2491).